Reading from the N-terminus, the 470-residue chain is MKKLVGSLAAISVLSATGFSYVGYKNVHNQKSVINTHQNEIKRIEKQLKSINNDINIKENELKSLLLEDEKNLISSKDKINKLKQEQRDLVKKDFDQKQMISKLTKDLTNLKLESETKKDQKAKVESELNNLKKTRKHKDELKDYFNKEIKNIQSELKNKTNEFTTNETKIESLKKELDELDKNKDQKKEELKSIKEIINKNYLLLFELNAKLSPYKKLEKQLLELKQQTSLLTKTKEEKQAEIDKQETILKDKQIQLSNLLEEINNNKTKLDQSDNELVNINQQIRDIESQIQNTNDEISKLKEEKEMDLVKVKSDITKINEQVNQLETQSNQTNTNISLLRQQIQKLDKQKETSTLNTQTLEKELNKKNIELEKLIKESESYSTSIKKLESERTQLQTKLDEIIKQNTQKEELIKQLEKELEKLSKRTQRLNVKKILLTSKVSELNKKISDKEKKITSLNKVIESEKK.

A signal peptide spans Met-1–Tyr-24.

This is an uncharacterized protein from Mycoplasma capricolum subsp. capricolum (strain California kid / ATCC 27343 / NCTC 10154).